An 81-amino-acid polypeptide reads, in one-letter code: Toxin-like peptide AaF1CA5 (81 aa).

Positions 1–22 are cleaved as a signal peptide; sequence MMKLMLFSIIVILFSLIGSIHG. The region spanning 25–81 is the LCN-type CS-alpha/beta domain; that stretch reads VPGNYPLDSSDDTYLCAPLGENPFCIKICRKHGVKYGLMLRLPCWCEYFGKIKNVKI. 2 disulfide bridges follow: C49–C68 and C53–C70.

The protein belongs to the long (3 C-C) scorpion toxin superfamily. As to expression, expressed by the venom gland.

It localises to the secreted. Functionally, probable neurotoxin that inhibits ion channels. The sequence is that of Toxin-like peptide AaF1CA5 from Androctonus australis (Sahara scorpion).